Consider the following 245-residue polypeptide: Nodulation protein G (245 aa).

NAD(+) is bound at residue 11-35; it reads VTGASGAIGGAIARVLHAQGAIVGL. Serine 139 lines the substrate pocket. Catalysis depends on tyrosine 152, which acts as the Proton acceptor.

The protein belongs to the short-chain dehydrogenases/reductases (SDR) family.

Proposed to modify Nod factor fatty acyl chain. This is Nodulation protein G (nodG) from Rhizobium meliloti (strain 1021) (Ensifer meliloti).